A 95-amino-acid chain; its full sequence is Alpha-conotoxin VxXXB (95 aa).

The N-terminal stretch at 1–24 (MPKLAVVLLVLLILPLSYFDAAGG) is a signal peptide. The propeptide occupies 25 to 45 (QAVQGDWRGNRLARDLQRGGR). Glu48 and Glu50 each carry 4-carboxyglutamate. At Pro59 the chain carries 4-hydroxyproline; partial. Disulfide bonds link Cys64-Cys73, Cys69-Cys81, Cys74-Cys91, and Cys79-Cys93. Pro75 is subject to 4-hydroxyproline; partial. 4-hydroxyproline; partial is present on Pro94. A Proline amide; in form [desGly-95]VxXXB modification is found at Pro94.

The protein belongs to the conotoxin D superfamily. Homodimer. Pseudo-homodimer (identical sequence, different post-translational modifications). Expressed by the venom duct.

It localises to the secreted. Alpha-conotoxins act on postsynaptic membranes, they bind to the nicotinic acetylcholine receptors (nAChR) and thus inhibit them. Through its two C-terminal domains, this homodimeric protein would bind to two nAChR allosteric sites, located outside the nAChR C-loop of the principal binding face and at the adjacent binding interface in a clockwise direction. It specifically blocks mammalian neuronal nAChR of the alpha-7/CHRNA7 (IC(50)=0.4 nM), alpha-3-beta-2/CHRNA3-CHRNB2 (IC(50)=8.4 nM) and alpha-4-beta-2/CHRNA4-CHRNB2 (IC(50)=228 nM) subtypes. It inhibits alpha-7/CHRNA7, alpha-3-beta-2/CHRNA3-CHRNB2 and alpha-4-beta-2/CHRNA4-CHRNB2 nAChR subtypes more efficiently than VxXXA and VxXXC. This is Alpha-conotoxin VxXXB from Conus vexillum (Flag cone).